The following is a 274-amino-acid chain: Lectin-like protein (274 aa).

The signal sequence occupies residues 1 to 19 (MKIHKLCFLALLLAHTTSA). Residues 28–268 (TSELVFLGDA…RHDIWSWTFQ (241 aa)) form a legume-lectin like region. The tract at residues 62–81 (SHGQSLWSTPVPFKPSSNSS) is disordered. Residue Asn-129 is glycosylated (N-linked (GlcNAc...) asparagine). Ser-238 is subject to Phosphoserine.

The protein belongs to the leguminous lectin family. Expressed in seedlings and leaves of adult plants.

Its subcellular location is the secreted. The protein localises to the extracellular space. It localises to the apoplast. The protein resides in the cell membrane. Its function is as follows. Plays a positive role in the effector-triggered immunity (ETI) response. Involved in salicylic acid (SA)-mediated processes occurring in ETI response, but is not involved in the autophagy process. Promotes systemic rather than local immunity. Essential for systemic acquired resistance (SAR), but not necessary for immune signaling downstream of SA. May act in parallel with SA. The protein is Lectin-like protein of Arabidopsis thaliana (Mouse-ear cress).